Here is a 98-residue protein sequence, read N- to C-terminus: MAKINFRPLHDRVVVKRIDAETKTKGGIIIPDSAKEKPQEGQVIAVGPGGRDETGKLTPIDVKVGDRVLFGKWSGTEIKLDGEELLIMKESDIMGVVG.

It belongs to the GroES chaperonin family. Heptamer of 7 subunits arranged in a ring. Interacts with the chaperonin GroEL.

It localises to the cytoplasm. Together with the chaperonin GroEL, plays an essential role in assisting protein folding. The GroEL-GroES system forms a nano-cage that allows encapsulation of the non-native substrate proteins and provides a physical environment optimized to promote and accelerate protein folding. GroES binds to the apical surface of the GroEL ring, thereby capping the opening of the GroEL channel. This Rhodopseudomonas palustris (strain ATCC BAA-98 / CGA009) protein is Co-chaperonin GroES 1.